Here is a 156-residue protein sequence, read N- to C-terminus: Arginine repressor (156 aa).

The protein belongs to the ArgR family.

The protein localises to the cytoplasm. It participates in amino-acid biosynthesis; L-arginine biosynthesis [regulation]. Functionally, regulates arginine biosynthesis genes. The chain is Arginine repressor from Yersinia pseudotuberculosis serotype I (strain IP32953).